Reading from the N-terminus, the 180-residue chain is ATP synthase subunit b, plastid (180 aa).

Residues Leu27–Leu49 traverse the membrane as a helical segment.

It belongs to the ATPase B chain family. F-type ATPases have 2 components, F(1) - the catalytic core - and F(0) - the membrane proton channel. F(1) has five subunits: alpha(3), beta(3), gamma(1), delta(1), epsilon(1). F(0) has four main subunits: a(1), b(1), b'(1) and c(10-14). The alpha and beta chains form an alternating ring which encloses part of the gamma chain. F(1) is attached to F(0) by a central stalk formed by the gamma and epsilon chains, while a peripheral stalk is formed by the delta, b and b' chains.

Its subcellular location is the plastid membrane. In terms of biological role, f(1)F(0) ATP synthase produces ATP from ADP in the presence of a proton or sodium gradient. F-type ATPases consist of two structural domains, F(1) containing the extramembraneous catalytic core and F(0) containing the membrane proton channel, linked together by a central stalk and a peripheral stalk. During catalysis, ATP synthesis in the catalytic domain of F(1) is coupled via a rotary mechanism of the central stalk subunits to proton translocation. Functionally, component of the F(0) channel, it forms part of the peripheral stalk, linking F(1) to F(0). This is ATP synthase subunit b, plastid from Cuscuta gronovii (Common dodder).